Reading from the N-terminus, the 212-residue chain is FMN-dependent NADH:quinone oxidoreductase (212 aa).

FMN contacts are provided by residues Ser-10, Ser-16 to Ser-18, and Met-98 to Phe-101.

Belongs to the azoreductase type 1 family. As to quaternary structure, homodimer. FMN is required as a cofactor.

The enzyme catalyses 2 a quinone + NADH + H(+) = 2 a 1,4-benzosemiquinone + NAD(+). It carries out the reaction N,N-dimethyl-1,4-phenylenediamine + anthranilate + 2 NAD(+) = 2-(4-dimethylaminophenyl)diazenylbenzoate + 2 NADH + 2 H(+). In terms of biological role, quinone reductase that provides resistance to thiol-specific stress caused by electrophilic quinones. Functionally, also exhibits azoreductase activity. Catalyzes the reductive cleavage of the azo bond in aromatic azo compounds to the corresponding amines. The polypeptide is FMN-dependent NADH:quinone oxidoreductase (Desulfotalea psychrophila (strain LSv54 / DSM 12343)).